We begin with the raw amino-acid sequence, 422 residues long: Inositol phosphorylceramide synthase catalytic subunit aur1 (422 aa).

Residues 1–47 lie on the Cytoplasmic side of the membrane; it reads MSALSTLKKRLAACNRASQYKLETSLNPMPTFRLLRNTKWSWTHLQY. The next 2 helical transmembrane spans lie at 48-68 and 69-85; these read VFLAGNLIFACIVIESPGFWG and KFGIACLLAIALTVPLT. Residues 86-87 lie on the Cytoplasmic side of the membrane; sequence RQ. Residues 88–108 form a helical membrane-spanning segment; sequence IFFPAIVIITWAILFYSCRFI. Topologically, residues 109–159 are lumenal; that stretch reads PERWRPPIWVRVLPTLENILYGSNLSSLLSKTTHSILDILAWVPYGVMHYS. N-linked (GlcNAc...) asparagine glycosylation is present at N132. Residues 160 to 180 form a helical membrane-spanning segment; it reads APFIISFILFIFAPPGTLPVW. The Cytoplasmic portion of the chain corresponds to 181 to 183; sequence ART. The chain crosses the membrane as a helical span at residues 184-204; it reads FGYMNLFGVLIQMAFPCSPPW. Topologically, residues 205–245 are lumenal; the sequence is YENMYGLEPATYAVRGSPGGLARIDALFGTSIYTDGFSNSP. The chain crosses the membrane as a helical span at residues 246–266; it reads VVFGAFPSLHAGWAMLEALFL. Residues 267 to 274 lie on the Cytoplasmic side of the membrane; it reads SHVFPRYR. Transmembrane regions (helical) follow at residues 275 to 292 and 293 to 313; these read FCFYGYVLWLCWCTMYLT and HHYFVDLVGGMCLAIICFVFA. Residues 314 to 422 are Cytoplasmic-facing; the sequence is QKLRLPQLQT…SSIFDASHLP (109 aa). S353 bears the Phosphoserine mark. Residues 386–406 form a disordered region; the sequence is EWSVGSSSPEPLPSPAADLID.

This sequence belongs to the AUR1 family. As to quaternary structure, component of the inositol phosphorylceramide synthase complex composed of at least aur1 and kei1.

It localises to the golgi apparatus. It is found in the golgi stack membrane. Its activity is regulated as follows. Inhibited by aureobasidin A (AbA). Its function is as follows. Catalytic component of the inositol phosphorylceramide synthase which catalyzes the addition of a phosphorylinositol group onto ceramide to form inositol phosphorylceramide, an essential step in sphingolipid biosynthesis. The protein is Inositol phosphorylceramide synthase catalytic subunit aur1 (aur1) of Schizosaccharomyces pombe (strain 972 / ATCC 24843) (Fission yeast).